The sequence spans 441 residues: Monodehydroascorbate reductase 3 (441 aa).

FAD is bound by residues 14 to 17, Glu41, Arg48, Lys53, Ile96, and 147 to 148; these read GGVA and RE. NAD(+) is bound by residues 173–179, Glu197, Arg203, and Gly262; that span reads GGFLGLE. 175 to 179 is a binding site for NADP(+); it reads FLGLE. Residues Arg203 and Gly262 each contribute to the NADP(+) site. Asp299 contacts FAD. 315 to 316 serves as a coordination point for NAD(+); sequence EH. Residue 315 to 316 coordinates NADP(+); the sequence is EH. Arg321 is an L-ascorbate binding site. Tyr350 provides a ligand contact to FAD. Tyr350 is an NAD(+) binding site. Residue Tyr350 participates in NADP(+) binding. L-ascorbate is bound at residue Arg352. The residue at position 418 (Ser418) is a Phosphoserine.

The protein belongs to the FAD-dependent oxidoreductase family. Requires FAD as cofactor.

It is found in the cytoplasm. The enzyme catalyses 2 monodehydro-L-ascorbate radical + NADH + H(+) = 2 L-ascorbate + NAD(+). Functionally, catalyzes the conversion of monodehydroascorbate to ascorbate, oxidizing NADH in the process. Required for producing sufficient ascorbate to maintain the interaction between Piriformospora indica and Arabidopsis in a mutualistic state. The sequence is that of Monodehydroascorbate reductase 3 from Arabidopsis thaliana (Mouse-ear cress).